The primary structure comprises 588 residues: Methylcrotonoyl-CoA carboxylase beta chain, mitochondrial (588 aa).

In terms of domain architecture, CoA carboxyltransferase N-terminal spans 72 to 329; it reads MNSTLKQLKE…KKQPSPVITE (258 aa). Positions 72–570 are carboxyltransferase; that stretch reads MNSTLKQLKE…RKVIALSLSA (499 aa). The 242-residue stretch at 329 to 570 folds into the CoA carboxyltransferase C-terminal domain; the sequence is ETEEPLYPTS…RKVIALSLSA (242 aa). Residues 366 to 395 form an acyl-CoA binding region; sequence RFDEFKELYGTTLICGFARVHGMPVGIIAN.

Belongs to the AccD/PCCB family. As to quaternary structure, probably a dodecamer composed of six biotin-containing alpha subunits and six beta subunits.

Its subcellular location is the mitochondrion matrix. It catalyses the reaction 3-methylbut-2-enoyl-CoA + hydrogencarbonate + ATP = 3-methyl-(2E)-glutaconyl-CoA + ADP + phosphate + H(+). The protein operates within amino-acid degradation; L-leucine degradation; (S)-3-hydroxy-3-methylglutaryl-CoA from 3-isovaleryl-CoA: step 2/3. Functionally, carboxyltransferase subunit of the 3-methylcrotonyl-CoA carboxylase, an enzyme that catalyzes the conversion of 3-methylcrotonyl-CoA to 3-methylglutaconyl-CoA, a critical step for leucine and isovaleric acid catabolism. In Dictyostelium discoideum (Social amoeba), this protein is Methylcrotonoyl-CoA carboxylase beta chain, mitochondrial (mccb).